The chain runs to 185 residues: DNA-directed RNA polymerase 22 kDa subunit (185 aa).

It belongs to the poxviridae DNA-directed RNA polymerase 22 kDa subunit family. In terms of assembly, the DNA-dependent RNA polymerase used for intermediate and late genes expression consists of eight subunits Rpo30/OPG66, Rpo7/OPG90, Rpo22/OPG103, Rpo147/OPG105, Rpo18/OPG119, Rpo19/OPG131, Rpo132/OPG151 and Rpo35/OPG156. The same holoenzyme, with the addition of the transcription-specificity factor OPG109, is used for early gene expression.

The protein localises to the virion. It carries out the reaction RNA(n) + a ribonucleoside 5'-triphosphate = RNA(n+1) + diphosphate. Functionally, part of the DNA-dependent RNA polymerase which catalyzes the transcription of viral DNA into RNA using the four ribonucleoside triphosphates as substrates. Responsible for the transcription of early, intermediate and late genes. DNA-dependent RNA polymerase associates with the early transcription factor (ETF), itself composed of OPG118 and OPG133, thereby allowing the early genes transcription. Late transcription, and probably also intermediate transcription, require newly synthesized RNA polymerase. This chain is DNA-directed RNA polymerase 22 kDa subunit (OPG103), found in Variola virus (isolate Human/India/Ind3/1967) (VARV).